A 304-amino-acid chain; its full sequence is HPr kinase/phosphorylase (304 aa).

Active-site residues include His136 and Lys157. Position 151–158 (151–158) interacts with ATP; it reads GESGIGKS. Residue Ser158 coordinates Mg(2+). Catalysis depends on Asp175, which acts as the Proton acceptor; for phosphorylation activity. Proton donor; for dephosphorylation activity. The important for the catalytic mechanism of both phosphorylation and dephosphorylation stretch occupies residues 198-207; that stretch reads LEVRGIGIID. Glu199 provides a ligand contact to Mg(2+). Arg240 is an active-site residue. Residues 261–266 are important for the catalytic mechanism of dephosphorylation; that stretch reads PVRPGR.

Belongs to the HPrK/P family. Homohexamer. Mg(2+) is required as a cofactor.

It carries out the reaction [HPr protein]-L-serine + ATP = [HPr protein]-O-phospho-L-serine + ADP + H(+). The enzyme catalyses [HPr protein]-O-phospho-L-serine + phosphate + H(+) = [HPr protein]-L-serine + diphosphate. Catalyzes the ATP- as well as the pyrophosphate-dependent phosphorylation of a specific serine residue in HPr, a phosphocarrier protein of the phosphoenolpyruvate-dependent sugar phosphotransferase system (PTS). HprK/P also catalyzes the pyrophosphate-producing, inorganic phosphate-dependent dephosphorylation (phosphorolysis) of seryl-phosphorylated HPr (P-Ser-HPr). The two antagonistic activities of HprK/P are regulated by several intracellular metabolites, which change their concentration in response to the absence or presence of rapidly metabolisable carbon sources (glucose, fructose, etc.) in the growth medium. Therefore, by controlling the phosphorylation state of HPr, HPrK/P is a sensor enzyme that plays a major role in the regulation of carbon metabolism and sugar transport: it mediates carbon catabolite repression (CCR), and regulates PTS-catalyzed carbohydrate uptake and inducer exclusion. The protein is HPr kinase/phosphorylase of Clostridium botulinum (strain Eklund 17B / Type B).